The following is a 248-amino-acid chain: Probable transcriptional regulatory protein Mpop_0922 (248 aa).

Belongs to the TACO1 family.

The protein resides in the cytoplasm. The protein is Probable transcriptional regulatory protein Mpop_0922 of Methylorubrum populi (strain ATCC BAA-705 / NCIMB 13946 / BJ001) (Methylobacterium populi).